A 150-amino-acid polypeptide reads, in one-letter code: uncharacterized protein (150 aa).

The HTH asnC-type domain occupies 5-66 (LDRTDKMLLE…KPNYKKLNLG (62 aa)). The segment at residues 24–43 (IAALSKKLGIPRTTVHYRIK) is a DNA-binding region (H-T-H motif).

This is an uncharacterized protein from Pyrococcus furiosus (strain ATCC 43587 / DSM 3638 / JCM 8422 / Vc1).